A 236-amino-acid chain; its full sequence is Lectin (236 aa).

Asparagine 118 carries N-linked (GlcNAc...) asparagine glycosylation.

This sequence belongs to the leguminous lectin family. As to quaternary structure, homodimer of noncovalently associated chains.

In terms of biological role, D-mannose and D-glucose specific lectin. The sequence is that of Lectin from Onobrychis viciifolia (Common sainfoin).